The following is a 146-amino-acid chain: Large ribosomal subunit protein bL9 (146 aa).

The protein belongs to the bacterial ribosomal protein bL9 family.

Binds to the 23S rRNA. This is Large ribosomal subunit protein bL9 from Flavobacterium johnsoniae (strain ATCC 17061 / DSM 2064 / JCM 8514 / BCRC 14874 / CCUG 350202 / NBRC 14942 / NCIMB 11054 / UW101) (Cytophaga johnsonae).